The sequence spans 151 residues: Ribosome maturation factor RimP (151 aa).

The protein belongs to the RimP family.

The protein resides in the cytoplasm. Required for maturation of 30S ribosomal subunits. The sequence is that of Ribosome maturation factor RimP from Shewanella piezotolerans (strain WP3 / JCM 13877).